Consider the following 281-residue polypeptide: MEALQNIGIKRRLRRFFRRDGRALIFAMDHGFEHGPTDFEPVWEHVNPRVIIRKVVRAGVDGVMMLPGMARIAGDDVKPEVGLMIKITSKTNLRPKAEQLMQSQLAFVEDAIKLGADAIAATVYWGSPQEDAMMRQFAEIVSYAHDLGFPVVQFAYPRGPYIDEKYGRKEDYRVVMYGARAAAEMGADMIKTYWTGSRETFAKVVDAAAGVPVLLSGGAKAENPLDFLKVVYEVIEAGGSGAVVGRNIFQRENPEPMIKALIRVIHRNEDPEEAAKAEGLL.

The active-site Schiff-base intermediate with dihydroxyacetone-P is Lys191.

This sequence belongs to the DeoC/FbaB aldolase family. In terms of assembly, homooctamer.

It is found in the cytoplasm. The catalysed reaction is beta-D-fructose 1,6-bisphosphate = D-glyceraldehyde 3-phosphate + dihydroxyacetone phosphate. With respect to regulation, activated by citrate. This is Fructose-bisphosphate aldolase class 1 (fba) from Pyrococcus abyssi (strain GE5 / Orsay).